A 397-amino-acid polypeptide reads, in one-letter code: MLLVNRAITLNLVKRCCWRSTMFMTPKRFLGTSEEESTAALLLQKNLIQRNNMLYGHGSGTIRCTVFDAGGNIVSPALDIKREELVAKHGLLPRDLRKIEKSRKNDLVPSFLVRKNGILVSLATIKTLIKPDMVIVFDSFGSLNSTSHKAFLNSLKLRLQNLDMVELKKDPLPYEFRALESIFISALSNLTSEMNVQVTICKGILQDLEYSITRDKLKFLLGQNKKLSNFYKKTVLIRDMLDDLLEQSDVLCSMYLSDLKNGVEHKDDDHSEIEMLLETYHNHLDEIVQITENIISNVKTTEEIINIILDSNRNQLMLLGIRFSIGMLSLGGPIFIGSLYGMNLENFIEETDYGFIAASAIGMISLGALYFYSIKHLHKLQKMSLFNYTNYARDVKK.

A mitochondrion-targeting transit peptide spans 1–37 (MLLVNRAITLNLVKRCCWRSTMFMTPKRFLGTSEEES). Residues 316–336 (LMLLGIRFSIGMLSLGGPIFI) form a helical membrane-spanning segment. Residues 340–343 (YGMN) carry the YGMN motif. The chain crosses the membrane as a helical span at residues 354–374 (GFIAASAIGMISLGALYFYSI).

It belongs to the CorA metal ion transporter (MIT) (TC 1.A.35) family. In terms of assembly, forms homooligomers. Interacts with MRS2.

The protein localises to the mitochondrion inner membrane. Mitochondrial inner membrane magnesium transporter required for mitochondrial magnesium homeostasis. Modulates the conductance of the MRS2 channel. Involved in the splicing of mRNA group II introns in mitochondria by affecting mitochondrial magnesium concentrations, which are critical for group II intron splicing. This is Mitochondrial inner membrane magnesium transporter LPE10 (LPE10) from Candida glabrata (strain ATCC 2001 / BCRC 20586 / JCM 3761 / NBRC 0622 / NRRL Y-65 / CBS 138) (Yeast).